The primary structure comprises 1339 residues: Inhibitor of Bruton tyrosine kinase (1339 aa).

ANK repeat units lie at residues Phe-51–Val-81, Ser-86–Ile-115, and Asp-119–Phe-154. 3 RCC1 repeats span residues Pro-142–Gln-195, Lys-196–Glu-247, and Gly-249–Lys-302. One can recognise a BTB 1 domain in the interval His-555–Leu-636. The interval Glu-685–Thr-704 is disordered. Residues Gly-689 to Arg-698 are compositionally biased toward basic residues. Residues Tyr-758 to Lys-826 enclose the BTB 2 domain. Residues Ser-970 to Lys-980 show a composition bias toward basic residues. 3 disordered regions span residues Ser-970–Ile-993, Arg-1058–Thr-1089, and Phe-1208–Leu-1237. The segment covering Asp-1214–Arg-1231 has biased composition (basic and acidic residues).

The protein localises to the cytoplasm. It is found in the membrane. In terms of biological role, acts as an inhibitor of BTK tyrosine kinase activity, thereby playing a role in B-cell development. The sequence is that of Inhibitor of Bruton tyrosine kinase (ibtk) from Xenopus laevis (African clawed frog).